The primary structure comprises 458 residues: NALCN channel auxiliary factor 1 (458 aa).

The chain crosses the membrane as a helical span at residues 40-60 (LSLASLLFFTVLLSDHLWFCA). Positions 70–155 (KEHQQQQRQQ…NRGKDDRGKA (86 aa)) are disordered. A compositionally biased stretch (low complexity) spans 75 to 96 (QQRQQQQQQQQQRQRQQQQQQR). Residues 136–145 (GDGGGGGGKG) are compositionally biased toward gly residues. Disulfide bonds link C191–C261, C226–C313, C246–C261, C304–C341, C324–C377, C330–C376, and C334–C361. N-linked (GlcNAc...) asparagine glycosylation occurs at N217. The helical transmembrane segment at 417–437 (LKLCVLVLILLHTVLTASAAQ) threads the bilayer.

Belongs to the NALF family. Component of the NALCN channel complex. NALCN complex consists of NALCN and auxiliary subunits, UNC79, UNC80 and NACL1. These auxiliary subunits are essential for the NALCN channel function.

The protein resides in the cell membrane. Auxillary component of the NALCN sodium channel complex, a channel that regulates the resting membrane potential and controls neuronal excitability. The sequence is that of NALCN channel auxiliary factor 1 from Homo sapiens (Human).